The sequence spans 372 residues: Spermidine/putrescine import ATP-binding protein PotA (372 aa).

Residues 11–241 (IELRSITKSY…PANLFVARFI (231 aa)) enclose the ABC transporter domain. 43-50 (GPSGCGKT) contributes to the ATP binding site.

Belongs to the ABC transporter superfamily. Spermidine/putrescine importer (TC 3.A.1.11.1) family. As to quaternary structure, the complex is composed of two ATP-binding proteins (PotA), two transmembrane proteins (PotB and PotC) and a solute-binding protein (PotD).

Its subcellular location is the cell inner membrane. It catalyses the reaction ATP + H2O + polyamine-[polyamine-binding protein]Side 1 = ADP + phosphate + polyamineSide 2 + [polyamine-binding protein]Side 1.. In terms of biological role, part of the ABC transporter complex PotABCD involved in spermidine/putrescine import. Responsible for energy coupling to the transport system. This Aggregatibacter actinomycetemcomitans (Actinobacillus actinomycetemcomitans) protein is Spermidine/putrescine import ATP-binding protein PotA.